A 654-amino-acid chain; its full sequence is MGKKGGTLKRSSKSTKTRKDIVEDQYDDEIDAFHKQRDIVPLDVNDDTDESDEDDVQPVFDLQGVDDESEEDEDTEDEEEAENGLTAKMIRQKKYLRAKFGDGDDEMADDDKDKEEDKRSTWGGRSGLYHSGDNVDFDILSSDDEDIKAEEEEVIRLRAEQLGSITAADAGLDDDSEEDSDRELTMEEISDKGKQATKSITDKKEKGDKDTHVEEIKKDINSLSKEEQMDVVYSSAPEIVGLLSELNDAVEELESKINPVMNKLKEGEISLNGLARYLEVKQLLLLTYCQSITFYLLLKSEGQPIRDHPVLARLVEIKSLLDKIKELDEELPPGFEESLARSIANGAVQKVVKEDQLTSPVSDSVDRITQDTAKPMKIDNAREEKKKKGEKRKHQNDLVDVQSEEMLKLRAALEGKLRTNGVLGSTVSKSDKAQKRQKLANRKLETFDDYVDDADNSTHNVTADKLTKLVSTKRKPKTISGDDDLPQRDDIGERRRKFELRVLAGAGVKSSEGDGRNKNGAFASDDEDDNDGDNNDMVDNDGESEDEFYKQVKQKQQAKRAAKAEIYSRKPHLMPSSPEHVDGKRHISNQMVSNRGLTRQRNRDLKNPRKKYRKNYEKKVTRRKGQVRDIRKQTGPYAGEARGINPNTSRSIRM.

Over residues 1-16 the composition is skewed to basic residues; sequence MGKKGGTLKRSSKSTK. Disordered stretches follow at residues 1–23, 35–145, and 164–212; these read MGKK…DIVE, KQRD…SDDE, and SITA…KDTH. A Nuclear localization signal 1 motif is present at residues 2 to 9; it reads GKKGGTLK. Acidic residues-rich tracts occupy residues 44–56, 64–82, and 103–114; these read VNDD…EDDV, GVDD…EEAE, and GDDEMADDDKDK. The stretch at 140-160 forms a coiled coil; the sequence is LSSDDEDIKAEEEEVIRLRAE. Residues 171 to 181 are compositionally biased toward acidic residues; it reads GLDDDSEEDSD. Positions 182–212 are enriched in basic and acidic residues; that stretch reads RELTMEEISDKGKQATKSITDKKEKGDKDTH. Residues 243–263 adopt a coiled-coil conformation; it reads LSELNDAVEELESKINPVMNK. Disordered regions lie at residues 362-397, 470-492, and 509-654; these read SDSV…HQND, VSTK…DDIG, and KSSE…SIRM. Positions 364–387 are enriched in basic and acidic residues; that stretch reads SVDRITQDTAKPMKIDNAREEKKK. A compositionally biased stretch (acidic residues) spans 524-546; sequence SDDEDDNDGDNNDMVDNDGESED. A compositionally biased stretch (basic residues) spans 552–561; it reads VKQKQQAKRA. Residues 588–599 show a composition bias toward polar residues; sequence SNQMVSNRGLTR. Residues 608–615 carry the Nuclear localization signal 2 motif; that stretch reads PRKKYRKN. The segment covering 645–654 has biased composition (polar residues); sequence NPNTSRSIRM.

The protein belongs to the SAS10 family. Interacts with NUCL1, NUCL2, JMJ14, NOF1 and MPP10 in the nucleus. In terms of tissue distribution, mainly present in tissues undergoing rapid cellular growth and differentiation. Mostly expressed in shoots and flowers, and, to a lower extent, in leaves, siliques, roots and seedlings.

Its subcellular location is the nucleus. The protein localises to the nucleolus. In terms of biological role, essential protein during embryogenesis. Involved both in gene transcription regulation and in processing events critical for proper rRNA biogenesis and nucleolar organization during reproduction; contributes to pre-rRNA processing at the 5' external transcribed spacer. Binds RNA. The sequence is that of Protein THALLO from Arabidopsis thaliana (Mouse-ear cress).